The sequence spans 218 residues: MTQDEMKKAAGWAALEYVEAGSIVGVGTGSTVNHFIDALATMKNEIKGAVSSSVASTEKLKELGIEVFDCNDVAGLDVYVDGADEINGKNEMIKGGGAALTREKIVAAISDKFICIVDDTKQVDVLGQFPLPVEVIPMARSYVARELVKLGGDPAYREGVITDNGNVILDVHGMKITDAKDLEDKINALPGVVTVGLFAHRGADVLLVGAPEGVKKFD.

Residues 28–31, 81–84, and 94–97 contribute to the substrate site; these read TGST, DGAD, and KGGG. Glutamate 103 serves as the catalytic Proton acceptor. Lysine 121 is a substrate binding site.

The protein belongs to the ribose 5-phosphate isomerase family. As to quaternary structure, homodimer.

It catalyses the reaction aldehydo-D-ribose 5-phosphate = D-ribulose 5-phosphate. It participates in carbohydrate degradation; pentose phosphate pathway; D-ribose 5-phosphate from D-ribulose 5-phosphate (non-oxidative stage): step 1/1. Catalyzes the reversible conversion of ribose-5-phosphate to ribulose 5-phosphate. This is Ribose-5-phosphate isomerase A from Aliivibrio fischeri (strain ATCC 700601 / ES114) (Vibrio fischeri).